Here is a 223-residue protein sequence, read N- to C-terminus: MIIDKLTIFGTDNIGIYIFTNDKYTIVPKNLDVETIQKIQETFKTEIIQTTIAKSFLIGIFVAGNNNVILLPRNVDDEEVKKIKDIARDVRVEILDIRPTALGNIILTNSYGALIYPELSSIEFKKIKESLQIDNIEKGSIANIITVGSVGVITDKAGLVHIDTTEEELDKLSKLFRVKIDTGTVNFGSAFIHSGLIANRNGVLVGSATTGPEILRIQRAFSD.

The protein belongs to the eIF-6 family.

Its function is as follows. Binds to the 50S ribosomal subunit and prevents its association with the 30S ribosomal subunit to form the 70S initiation complex. The chain is Translation initiation factor 6 from Sulfurisphaera tokodaii (strain DSM 16993 / JCM 10545 / NBRC 100140 / 7) (Sulfolobus tokodaii).